A 320-amino-acid chain; its full sequence is Probable trehalose-phosphate phosphatase C (320 aa).

The protein belongs to the trehalose phosphatase family. Requires a divalent metal cation as cofactor.

It carries out the reaction alpha,alpha-trehalose 6-phosphate + H2O = alpha,alpha-trehalose + phosphate. It functions in the pathway glycan biosynthesis; trehalose biosynthesis. Functionally, removes the phosphate from trehalose 6-phosphate to produce free trehalose. Trehalose accumulation in plant may improve abiotic stress tolerance. The chain is Probable trehalose-phosphate phosphatase C (TPPC) from Arabidopsis thaliana (Mouse-ear cress).